The chain runs to 599 residues: Leishmanolysin (599 aa).

The signal sequence occupies residues 1-39 (MSVDSSSTHRHRSVAARLVRLAAAGAAVIAAVGTAAAWA). Positions 40-97 (HAGAVQHRCIHDAMQARVRQSVARHHTAPGAVSAVGLPYVTLDTAAAADRRPGSAPTV) are cleaved as a propeptide — activation peptide. Cystine bridges form between C122/C139 and C188/C227. H261 is a Zn(2+) binding site. Residue E262 is part of the active site. Position 265 (H265) interacts with Zn(2+). N-linked (GlcNAc...) asparagine glycosylation occurs at N297. Cystine bridges form between C311–C383, C390–C452, C403–C422, C412–C486, C463–C507, C512–C562, and C532–C555. Zn(2+) is bound at residue H331. A glycan (N-linked (GlcNAc...) asparagine) is linked at N394. The GPI-anchor amidated asparagine moiety is linked to residue N574. Residues 575 to 599 (AAAGRRGPRAAATALLVAALLAVAL) constitute a propeptide, removed in mature form.

This sequence belongs to the peptidase M8 family. Zn(2+) serves as cofactor.

The protein localises to the cell membrane. It carries out the reaction Preference for hydrophobic residues at P1 and P1' and basic residues at P2' and P3'. A model nonapeptide is cleaved at -Ala-Tyr-|-Leu-Lys-Lys-.. Has an integral role during the infection of macrophages in the mammalian host. In Leishmania chagasi, this protein is Leishmanolysin (gp63).